A 378-amino-acid polypeptide reads, in one-letter code: Ribosomal RNA large subunit methyltransferase G (378 aa).

The protein belongs to the methyltransferase superfamily. RlmG family.

The protein resides in the cytoplasm. The enzyme catalyses guanosine(1835) in 23S rRNA + S-adenosyl-L-methionine = N(2)-methylguanosine(1835) in 23S rRNA + S-adenosyl-L-homocysteine + H(+). In terms of biological role, specifically methylates the guanine in position 1835 (m2G1835) of 23S rRNA. This chain is Ribosomal RNA large subunit methyltransferase G, found in Shigella flexneri serotype 5b (strain 8401).